The primary structure comprises 234 residues: Ubiquinone biosynthesis O-methyltransferase (234 aa).

Positions 40, 59, 80, and 123 each coordinate S-adenosyl-L-methionine.

It belongs to the methyltransferase superfamily. UbiG/COQ3 family.

The catalysed reaction is a 3-demethylubiquinol + S-adenosyl-L-methionine = a ubiquinol + S-adenosyl-L-homocysteine + H(+). It catalyses the reaction a 3-(all-trans-polyprenyl)benzene-1,2-diol + S-adenosyl-L-methionine = a 2-methoxy-6-(all-trans-polyprenyl)phenol + S-adenosyl-L-homocysteine + H(+). It functions in the pathway cofactor biosynthesis; ubiquinone biosynthesis. O-methyltransferase that catalyzes the 2 O-methylation steps in the ubiquinone biosynthetic pathway. The polypeptide is Ubiquinone biosynthesis O-methyltransferase (Coxiella burnetii (strain CbuG_Q212) (Coxiella burnetii (strain Q212))).